Consider the following 497-residue polypeptide: GDP-fucose protein O-fucosyltransferase 4 (497 aa).

Over 1 to 6 the chain is Cytoplasmic; sequence MACRRR. A helical; Signal-anchor for type II membrane protein membrane pass occupies residues 7-27; it reads LLPCAGLGLFGVLCWVWVSFA. The Lumenal portion of the chain corresponds to 28–497; the sequence is SFPDDQLPLE…ITERRARGKH (470 aa). N-linked (GlcNAc...) asparagine glycosylation is present at Asn169. The cysteines at positions 392 and 395 are disulfide-linked. The segment at 406 to 427 is disordered; it reads RAHRKDPERNPPPLPKMASNSH. Residue Asn474 is glycosylated (N-linked (GlcNAc...) asparagine).

The protein belongs to the glycosyltransferase 10 family.

It is found in the endoplasmic reticulum membrane. It carries out the reaction L-threonyl-[protein] + GDP-beta-L-fucose = 3-O-(alpha-L-fucosyl)-L-threonyl-[protein] + GDP + H(+). The enzyme catalyses L-seryl-[protein] + GDP-beta-L-fucose = 3-O-(alpha-L-fucosyl)-L-seryl-[protein] + GDP + H(+). The protein operates within protein modification; protein glycosylation. Its function is as follows. Protein O-fucosyltransferase that specifically catalyzes O-fucosylation of serine or threonine residues in EMI domains of target proteins. Attaches fucose through an O-glycosidic linkage. O-fucosylation of EMI domain-containing proteins may be required for facilitating protein folding and secretion. The chain is GDP-fucose protein O-fucosyltransferase 4 (fut11) from Oryzias latipes (Japanese rice fish).